The sequence spans 146 residues: Large ribosomal subunit protein uL15 (146 aa).

A compositionally biased stretch (basic and acidic residues) spans 1–13; it reads MKLHELKPAEGSR. The interval 1–48 is disordered; the sequence is MKLHELKPAEGSRKVRNRVGRGIGSGNGKTAGKGHKGQNARSGGGVRL. Residues 21–31 are compositionally biased toward gly residues; that stretch reads RGIGSGNGKTA.

This sequence belongs to the universal ribosomal protein uL15 family. In terms of assembly, part of the 50S ribosomal subunit.

Its function is as follows. Binds to the 23S rRNA. The chain is Large ribosomal subunit protein uL15 from Bacillus cytotoxicus (strain DSM 22905 / CIP 110041 / 391-98 / NVH 391-98).